The sequence spans 332 residues: tRNA dimethylallyltransferase (332 aa).

17-24 (GPTCSGKS) provides a ligand contact to ATP. 19–24 (TCSGKS) lines the substrate pocket. Interaction with substrate tRNA regions lie at residues 42 to 45 (DSMQ) and 166 to 170 (QRISR).

It belongs to the IPP transferase family. In terms of assembly, monomer. Mg(2+) serves as cofactor.

The catalysed reaction is adenosine(37) in tRNA + dimethylallyl diphosphate = N(6)-dimethylallyladenosine(37) in tRNA + diphosphate. Its function is as follows. Catalyzes the transfer of a dimethylallyl group onto the adenine at position 37 in tRNAs that read codons beginning with uridine, leading to the formation of N6-(dimethylallyl)adenosine (i(6)A). In Gluconobacter oxydans (strain 621H) (Gluconobacter suboxydans), this protein is tRNA dimethylallyltransferase.